Here is a 249-residue protein sequence, read N- to C-terminus: Voltage-gated potassium channel subunit beta-3 (249 aa).

Residues Asn-44, Ser-74, Arg-75, Gln-100, Trp-129, Ser-130, Pro-131, Leu-132, Ala-133, Cys-134, Lys-140, Lys-150, Gly-209, Ser-211, Gln-215, and Glu-218 each contribute to the NADP(+) site.

Belongs to the shaker potassium channel beta subunit family. Forms heteromultimeric complex with alpha subunits. Interacts with KCNA5 and KCNB2. In terms of tissue distribution, strong expression in brain, with highest levels in neocortical and allocortical regions, hippocampus, olfactory bulb and cerebellum. Also strong in kidney. Weak expression in lung, skeletal muscle and heart.

It is found in the cytoplasm. Its function is as follows. Regulatory subunit of the voltage-gated potassium (Kv) channels composed of pore-forming and potassium-conducting alpha subunits and of regulatory beta subunit. The beta-3/KCNAB3 subunit may mediate closure of potassium channels. Enhances the expression of Kv2.2/KCNB2 alpha subunit-containing Kv channels but not Kv2.1/KCNB1. May display nicotinamide adenine dinucleotide phosphate (NADPH)-dependent aldoketoreductase activity. The binding of oxidized and reduced NADP(H) cofactors may be required for the regulation of potassium channel activity. The polypeptide is Voltage-gated potassium channel subunit beta-3 (Mus musculus (Mouse)).